The sequence spans 155 residues: Ribosome maturation factor RimP (155 aa).

This sequence belongs to the RimP family.

It localises to the cytoplasm. Its function is as follows. Required for maturation of 30S ribosomal subunits. This Synechococcus sp. (strain WH7803) protein is Ribosome maturation factor RimP.